Consider the following 400-residue polypeptide: Nicotinate phosphoribosyltransferase (400 aa).

Phosphohistidine; by autocatalysis is present on His220.

The protein belongs to the NAPRTase family. In terms of processing, transiently phosphorylated on a His residue during the reaction cycle. Phosphorylation strongly increases the affinity for substrates and increases the rate of nicotinate D-ribonucleotide production. Dephosphorylation regenerates the low-affinity form of the enzyme, leading to product release.

The catalysed reaction is nicotinate + 5-phospho-alpha-D-ribose 1-diphosphate + ATP + H2O = nicotinate beta-D-ribonucleotide + ADP + phosphate + diphosphate. The protein operates within cofactor biosynthesis; NAD(+) biosynthesis; nicotinate D-ribonucleotide from nicotinate: step 1/1. Functionally, catalyzes the synthesis of beta-nicotinate D-ribonucleotide from nicotinate and 5-phospho-D-ribose 1-phosphate at the expense of ATP. The polypeptide is Nicotinate phosphoribosyltransferase (Escherichia coli (strain K12 / MC4100 / BW2952)).